Consider the following 311-residue polypeptide: tRNA dimethylallyltransferase (311 aa).

ATP is bound at residue 11-18; the sequence is GPTASGKS. 13–18 serves as a coordination point for substrate; it reads TASGKS. Interaction with substrate tRNA regions lie at residues 36 to 39 and 160 to 164; these read DSMQ and QRLIR.

Belongs to the IPP transferase family. Monomer. The cofactor is Mg(2+).

The catalysed reaction is adenosine(37) in tRNA + dimethylallyl diphosphate = N(6)-dimethylallyladenosine(37) in tRNA + diphosphate. Catalyzes the transfer of a dimethylallyl group onto the adenine at position 37 in tRNAs that read codons beginning with uridine, leading to the formation of N6-(dimethylallyl)adenosine (i(6)A). In Rickettsia prowazekii (strain Madrid E), this protein is tRNA dimethylallyltransferase.